The chain runs to 283 residues: Pantothenate synthetase (283 aa).

30 to 37 provides a ligand contact to ATP; the sequence is MGALHEGH. His37 acts as the Proton donor in catalysis. Gln61 contacts (R)-pantoate. Gln61 provides a ligand contact to beta-alanine. Residue 147–150 coordinates ATP; the sequence is GEKD. Gln153 provides a ligand contact to (R)-pantoate. ATP-binding positions include Val176 and 184–187; that span reads VSSR.

It belongs to the pantothenate synthetase family. Homodimer.

The protein resides in the cytoplasm. It carries out the reaction (R)-pantoate + beta-alanine + ATP = (R)-pantothenate + AMP + diphosphate + H(+). It participates in cofactor biosynthesis; (R)-pantothenate biosynthesis; (R)-pantothenate from (R)-pantoate and beta-alanine: step 1/1. Catalyzes the condensation of pantoate with beta-alanine in an ATP-dependent reaction via a pantoyl-adenylate intermediate. The protein is Pantothenate synthetase of Chlorobium luteolum (strain DSM 273 / BCRC 81028 / 2530) (Pelodictyon luteolum).